Consider the following 158-residue polypeptide: CD-NTase/cGAS isopeptidase (158 aa).

Glu-38 functions as the Proton donor/acceptor in the catalytic mechanism. His-100, His-102, and Asp-113 together coordinate Zn(2+).

Belongs to the peptidase M67B family. Cap3 isopeptidase subfamily.

Metalloprotease priming reversal component of a CBASS antivirus system. CBASS (cyclic oligonucleotide-based antiphage signaling system) provides immunity against bacteriophages. The CD-NTase protein synthesizes cyclic nucleotides in response to infection; these serve as specific second messenger signals. The signals activate a diverse range of effectors, leading to bacterial cell death and thus abortive phage infection. A type II-A(GA) CBASS system. In terms of biological role, reverses the primed state of CdnA, the CD-NTase. Its function is as follows. The capV-cdnA-cap2-cap3 operon provides about 10(4)-fold protection in strain BWHPSA011 against infection by phage PaMx41. In P.aeruginosa strain PAO1 it confers protection against phages PaMx41 and JBD18 but not JBD67 (JBD18 and JBD67 do not replicate in BWHPSA011 / Pa011). When acb2 in JBD67 is deleted this CBASS operon then protects against JDB67 also. This CBASS system limits prophage induction of lysogenized JBD67 as well as viral lytic replication. The protein is CD-NTase/cGAS isopeptidase of Pseudomonas aeruginosa (strain BWHPSA011 / Pa011).